The sequence spans 258 residues: Acetylglutamate kinase (258 aa).

Substrate contacts are provided by residues 44–45 (GG), arginine 66, and asparagine 158. ATP contacts are provided by residues 181–186 (DVSGIL) and 209–211 (IIT).

Belongs to the acetylglutamate kinase family. ArgB subfamily. Homodimer.

The protein localises to the cytoplasm. The enzyme catalyses N-acetyl-L-glutamate + ATP = N-acetyl-L-glutamyl 5-phosphate + ADP. The protein operates within amino-acid biosynthesis; L-arginine biosynthesis; N(2)-acetyl-L-ornithine from L-glutamate: step 2/4. In terms of biological role, catalyzes the ATP-dependent phosphorylation of N-acetyl-L-glutamate. This Citrobacter koseri (strain ATCC BAA-895 / CDC 4225-83 / SGSC4696) protein is Acetylglutamate kinase.